A 165-amino-acid chain; its full sequence is S-(2-succino)cysteine N-acetyltransferase (165 aa).

Positions 3-162 (PRYRLAVERD…ITVYMKKQLR (160 aa)) constitute an N-acetyltransferase domain.

It belongs to the acetyltransferase family.

It carries out the reaction S-(2-succino)-L-cysteine + acetyl-CoA = N-acetyl-S-(2-succino)-L-cysteine + CoA + H(+). It functions in the pathway amino-acid biosynthesis; L-cysteine biosynthesis. Functionally, catalyzes the N-acetylation of S-(2-succino)cysteine. Is involved in a S-(2-succino)cysteine (2SC) degradation pathway that allows B.subtilis to grow on 2SC as a sole sulfur source, via its metabolization to cysteine. Moreover, 2SC is a toxic compound in B.subtilis at high exogenous concentrations, and this enzyme relieves 2SC toxicity via N-acetylation. The polypeptide is S-(2-succino)cysteine N-acetyltransferase (Bacillus subtilis (strain 168)).